The chain runs to 455 residues: tRNA modification GTPase MnmE (455 aa).

Arg24, Glu81, and Lys121 together coordinate (6S)-5-formyl-5,6,7,8-tetrahydrofolate. One can recognise a TrmE-type G domain in the interval 217–378; that stretch reads GMKVVIAGRP…LKEHLKDIMG (162 aa). Asn227 is a K(+) binding site. Residues 227-232, 246-252, 271-274, and 336-339 contribute to the GTP site; these read NAGKSS, TDIAGTT, DTAG, and NKAD. Ser231 is a Mg(2+) binding site. Residues Thr246, Ile248, and Thr251 each coordinate K(+). Thr252 contributes to the Mg(2+) binding site. Lys455 is a (6S)-5-formyl-5,6,7,8-tetrahydrofolate binding site.

This sequence belongs to the TRAFAC class TrmE-Era-EngA-EngB-Septin-like GTPase superfamily. TrmE GTPase family. As to quaternary structure, homodimer. Heterotetramer of two MnmE and two MnmG subunits. K(+) serves as cofactor.

The protein localises to the cytoplasm. Functionally, exhibits a very high intrinsic GTPase hydrolysis rate. Involved in the addition of a carboxymethylaminomethyl (cmnm) group at the wobble position (U34) of certain tRNAs, forming tRNA-cmnm(5)s(2)U34. This chain is tRNA modification GTPase MnmE, found in Psychromonas ingrahamii (strain DSM 17664 / CCUG 51855 / 37).